A 247-amino-acid chain; its full sequence is ATP synthase subunit a, chloroplastic (247 aa).

5 helical membrane-spanning segments follow: residues 38–58 (QVLI…TVAV), 95–115 (VPFI…GALL), 134–154 (INTT…AGLT), 199–219 (LVVV…VMFL), and 220–240 (GLFT…AYIG).

The protein belongs to the ATPase A chain family. F-type ATPases have 2 components, CF(1) - the catalytic core - and CF(0) - the membrane proton channel. CF(1) has five subunits: alpha(3), beta(3), gamma(1), delta(1), epsilon(1). CF(0) has four main subunits: a, b, b' and c.

The protein resides in the plastid. Its subcellular location is the chloroplast thylakoid membrane. Key component of the proton channel; it plays a direct role in the translocation of protons across the membrane. This chain is ATP synthase subunit a, chloroplastic, found in Acorus calamus var. americanus (American sweet flag).